The chain runs to 313 residues: Recombination-promoting nuclease pSLT051 (313 aa).

Belongs to the Rpn/YhgA-like nuclease family.

Functionally, a low activity DNA endonuclease probably yielding 3'-hydroxyl ends. Involved in RecA-independent recombination and horizontal gene transfer. The sequence is that of Recombination-promoting nuclease pSLT051 from Salmonella typhimurium (strain LT2 / SGSC1412 / ATCC 700720).